The sequence spans 932 residues: 2-oxoglutarate dehydrogenase E1 component (932 aa).

This sequence belongs to the alpha-ketoglutarate dehydrogenase family. Homodimer. Part of the 2-oxoglutarate dehydrogenase (OGDH) complex composed of E1 (2-oxoglutarate dehydrogenase), E2 (dihydrolipoamide succinyltransferase) and E3 (dihydrolipoamide dehydrogenase); the complex contains multiple copies of the three enzymatic components (E1, E2 and E3). It depends on thiamine diphosphate as a cofactor.

It catalyses the reaction N(6)-[(R)-lipoyl]-L-lysyl-[protein] + 2-oxoglutarate + H(+) = N(6)-[(R)-S(8)-succinyldihydrolipoyl]-L-lysyl-[protein] + CO2. In terms of biological role, E1 component of the 2-oxoglutarate dehydrogenase (OGDH) complex which catalyzes the decarboxylation of 2-oxoglutarate, the first step in the conversion of 2-oxoglutarate to succinyl-CoA and CO(2). In Staphylococcus aureus (strain USA300), this protein is 2-oxoglutarate dehydrogenase E1 component.